A 636-amino-acid chain; its full sequence is LEAF RUST 10 DISEASE-RESISTANCE LOCUS RECEPTOR-LIKE PROTEIN KINASE-like 1.5 (636 aa).

Positions 1–26 (MSQPPWRCFSLLIFVLTIFSTKPSSA) are cleaved as a signal peptide. Over 27–257 (STSCSSSFHC…NNKRVNHIAV (231 aa)) the chain is Extracellular. Residues N73, N102, N146, and N224 are each glycosylated (N-linked (GlcNAc...) asparagine). The chain crosses the membrane as a helical span at residues 258-278 (LSLIFALTCLLLVFSVAVAIF). Residues 279–636 (RSRRASFLSS…RVADDDVAKN (358 aa)) lie on the Cytoplasmic side of the membrane. The 305-residue stretch at 324–628 (FDPKRKIGDG…LRRIRSHTRV (305 aa)) folds into the Protein kinase domain. Residues 330–338 (IGDGGFGSV) and K352 each bind ATP. D458 functions as the Proton acceptor in the catalytic mechanism.

This sequence belongs to the protein kinase superfamily. Ser/Thr protein kinase family.

The protein resides in the cell membrane. It catalyses the reaction L-seryl-[protein] + ATP = O-phospho-L-seryl-[protein] + ADP + H(+). The catalysed reaction is L-threonyl-[protein] + ATP = O-phospho-L-threonyl-[protein] + ADP + H(+). The polypeptide is LEAF RUST 10 DISEASE-RESISTANCE LOCUS RECEPTOR-LIKE PROTEIN KINASE-like 1.5 (Arabidopsis thaliana (Mouse-ear cress)).